We begin with the raw amino-acid sequence, 781 residues long: Coiled-coil and C2 domain-containing protein 1-like (781 aa).

5 disordered regions span residues Met-32–Gly-63, Glu-94–Ser-134, Glu-187–Ser-296, Cys-313–Asn-373, and Gly-403–Lys-447. Positions Arg-37–Ala-59 are enriched in low complexity. Positions Leu-98 to Ala-107 are enriched in gly residues. Residues Ala-108–Arg-118 show a composition bias toward low complexity. Pro residues-rich tracts occupy residues Ala-119–Ala-129 and Pro-204–Pro-222. Residues Ala-244–Lys-256 are compositionally biased toward low complexity. The segment covering Ile-269–Asn-280 has biased composition (basic residues). Positions Ile-285 to Ser-296 are enriched in basic and acidic residues. Residues Pro-324 to Pro-341 are compositionally biased toward pro residues. Residues Lys-363–Asn-373 show a composition bias toward basic and acidic residues. The 137-residue stretch at Tyr-605–Leu-741 folds into the C2 domain.

The protein belongs to the CC2D1 family.

The chain is Coiled-coil and C2 domain-containing protein 1-like from Caenorhabditis elegans.